The sequence spans 299 residues: Hemolysin C homolog (299 aa).

2 consecutive CBS domains span residues 80-142 (MVPR…NGRL) and 145-202 (LIRK…IDDE).

Belongs to the UPF0053 family. Hemolysin C subfamily.

The polypeptide is Hemolysin C homolog (tlyC) (Rickettsia rickettsii (strain Sheila Smith)).